A 91-amino-acid chain; its full sequence is UPF0250 protein NMA1380 (91 aa).

This sequence belongs to the UPF0250 family.

The polypeptide is UPF0250 protein NMA1380 (Neisseria meningitidis serogroup A / serotype 4A (strain DSM 15465 / Z2491)).